We begin with the raw amino-acid sequence, 232 residues long: Large ribosomal subunit protein uL1 (232 aa).

The protein belongs to the universal ribosomal protein uL1 family. Part of the 50S ribosomal subunit.

Binds directly to 23S rRNA. The L1 stalk is quite mobile in the ribosome, and is involved in E site tRNA release. Functionally, protein L1 is also a translational repressor protein, it controls the translation of the L11 operon by binding to its mRNA. The protein is Large ribosomal subunit protein uL1 of Methylobacterium radiotolerans (strain ATCC 27329 / DSM 1819 / JCM 2831 / NBRC 15690 / NCIMB 10815 / 0-1).